Reading from the N-terminus, the 395-residue chain is tRNA-specific 2-thiouridylase MnmA (395 aa).

Residues 7-14 and M33 each bind ATP; that span reads GLSGGVDS. Positions 95-97 are interaction with target base in tRNA; that stretch reads NPD. The active-site Nucleophile is the C100. The cysteines at positions 100 and 200 are disulfide-linked. G124 is an ATP binding site. An interaction with tRNA region spans residues 150-152; it reads KDQ. C200 functions as the Cysteine persulfide intermediate in the catalytic mechanism. Residues 346 to 347 form an interaction with tRNA region; the sequence is RY.

The protein belongs to the MnmA/TRMU family.

It localises to the cytoplasm. It carries out the reaction S-sulfanyl-L-cysteinyl-[protein] + uridine(34) in tRNA + AH2 + ATP = 2-thiouridine(34) in tRNA + L-cysteinyl-[protein] + A + AMP + diphosphate + H(+). In terms of biological role, catalyzes the 2-thiolation of uridine at the wobble position (U34) of tRNA, leading to the formation of s(2)U34. This chain is tRNA-specific 2-thiouridylase MnmA, found in Christiangramia forsetii (strain DSM 17595 / CGMCC 1.15422 / KT0803) (Gramella forsetii).